Consider the following 278-residue polypeptide: Ubiquinone biosynthesis protein COQ4, mitochondrial (278 aa).

A mitochondrion-targeting transit peptide spans 1-28 (MATPTSVRIAGFRSLQALCAQRTVTRNF). Zn(2+) contacts are provided by His-164, Asp-165, His-168, and Glu-180.

It belongs to the COQ4 family. Component of a multi-subunit COQ enzyme complex, composed of at least COQ3, COQ4, COQ5, COQ6, COQ7 and COQ9. The cofactor is Zn(2+).

It localises to the mitochondrion inner membrane. The enzyme catalyses a 4-hydroxy-3-methoxy-5-(all-trans-polyprenyl)benzoate + H(+) = a 2-methoxy-6-(all-trans-polyprenyl)phenol + CO2. Its pathway is cofactor biosynthesis; ubiquinone biosynthesis. Functionally, lyase that catalyzes the C1-decarboxylation of 4-hydroxy-3-methoxy-5-(all-trans-polyprenyl)benzoic acid into 2-methoxy-6-(all-trans-polyprenyl)phenol during ubiquinone biosynthesis. In Uncinocarpus reesii (strain UAMH 1704), this protein is Ubiquinone biosynthesis protein COQ4, mitochondrial.